A 131-amino-acid polypeptide reads, in one-letter code: MTAANQNYGTGRRKSSSARVFIKPGNGNITIDQRSLDVYFGRETSRMVVRQPLELVELLDKLDLYITVKGGGISGQAGAIRHGITRALMEYDETLRPALRAAGFVTRDARRVERKKVGLHKARRRPQYSKR.

This sequence belongs to the universal ribosomal protein uS9 family.

This is Small ribosomal subunit protein uS9 from Actinobacillus pleuropneumoniae serotype 5b (strain L20).